The following is a 494-amino-acid chain: Glycerol kinase (494 aa).

Residue Thr13 participates in ADP binding. Residues Thr13, Thr14, and Ser15 each coordinate ATP. Residue Thr13 participates in sn-glycerol 3-phosphate binding. Arg17 lines the ADP pocket. Sn-glycerol 3-phosphate-binding residues include Arg83, Glu84, Tyr135, and Asp244. Positions 83, 84, 135, 244, and 245 each coordinate glycerol. Residues Thr266 and Gly309 each contribute to the ADP site. Thr266, Gly309, Gln313, and Gly410 together coordinate ATP. Residues Gly410 and Asn414 each coordinate ADP.

The protein belongs to the FGGY kinase family.

The catalysed reaction is glycerol + ATP = sn-glycerol 3-phosphate + ADP + H(+). The protein operates within polyol metabolism; glycerol degradation via glycerol kinase pathway; sn-glycerol 3-phosphate from glycerol: step 1/1. With respect to regulation, inhibited by fructose 1,6-bisphosphate (FBP). In terms of biological role, key enzyme in the regulation of glycerol uptake and metabolism. Catalyzes the phosphorylation of glycerol to yield sn-glycerol 3-phosphate. The polypeptide is Glycerol kinase (Shewanella baltica (strain OS195)).